The following is a 94-amino-acid chain: Fungal defensin scedosporisin-2 (94 aa).

The signal sequence occupies residues 1–25 (MKFSNISIAALFTILASTAMAAPAA). The propeptide occupies 26–56 (DSPDSIVAREPAPVEETYEAPSGLEKRGFGC). Positions 54, 55, and 56 each coordinate beta-D-GlcNAc-(1-&gt;4)-Mur2Ac(oyl-L-Ala-gamma-D-Glu-L-Lys-D-Ala-D-Ala)-di-trans,octa-cis-undecaprenyl diphosphate. Disulfide bonds link C56–C78, C63–C91, and C67–C93. The tract at residues 57-60 (PGSE) is interaction site with membrane interface. H66 provides a ligand contact to beta-D-GlcNAc-(1-&gt;4)-Mur2Ac(oyl-L-Ala-gamma-D-Glu-L-Lys-D-Ala-D-Ala)-di-trans,octa-cis-undecaprenyl diphosphate. The interaction site with membrane interface stretch occupies residues 83–90 (IPFVGRPR). Position 91 (C91) interacts with beta-D-GlcNAc-(1-&gt;4)-Mur2Ac(oyl-L-Ala-gamma-D-Glu-L-Lys-D-Ala-D-Ala)-di-trans,octa-cis-undecaprenyl diphosphate.

This sequence belongs to the invertebrate defensin family.

The protein localises to the secreted. Its subcellular location is the target cell membrane. Functionally, antibacterial peptide potently active against Gram-positive bacteria. May act by selectively inhibiting peptidoglycan biosynthesis through complex formation with the cell wall precursor lipid II (1:1 molar ratio) thus inhibiting cell wall synthesis. Shows remarkably activity against resistant isolates such as methicillin-resistant Staphylococcus aureus (MRSA) and vancomycin-resistant Enterococci (VRE) at the concentration of micromolar level. Does not act by destroying the membrane integrity, which is consistent with its nonamphiphilic architecture. Acts more rapidly than vancomycin. Shows low hemolysis and cytotoxicity and high serum stability. In vivo, is as efficient as vancomycin to protect mouse peritonitis models from MRSA infections. This chain is Fungal defensin scedosporisin-2, found in Pseudallescheria apiosperma (Scedosporium apiospermum).